A 476-amino-acid polypeptide reads, in one-letter code: Aspartyl/glutamyl-tRNA(Asn/Gln) amidotransferase subunit B (476 aa).

Belongs to the GatB/GatE family. GatB subfamily. As to quaternary structure, heterotrimer of A, B and C subunits.

The enzyme catalyses L-glutamyl-tRNA(Gln) + L-glutamine + ATP + H2O = L-glutaminyl-tRNA(Gln) + L-glutamate + ADP + phosphate + H(+). It catalyses the reaction L-aspartyl-tRNA(Asn) + L-glutamine + ATP + H2O = L-asparaginyl-tRNA(Asn) + L-glutamate + ADP + phosphate + 2 H(+). Functionally, allows the formation of correctly charged Asn-tRNA(Asn) or Gln-tRNA(Gln) through the transamidation of misacylated Asp-tRNA(Asn) or Glu-tRNA(Gln) in organisms which lack either or both of asparaginyl-tRNA or glutaminyl-tRNA synthetases. The reaction takes place in the presence of glutamine and ATP through an activated phospho-Asp-tRNA(Asn) or phospho-Glu-tRNA(Gln). This chain is Aspartyl/glutamyl-tRNA(Asn/Gln) amidotransferase subunit B, found in Listeria welshimeri serovar 6b (strain ATCC 35897 / DSM 20650 / CCUG 15529 / CIP 8149 / NCTC 11857 / SLCC 5334 / V8).